The chain runs to 651 residues: Endo-1,4-beta-xylanase A (651 aa).

An N-terminal signal peptide occupies residues 1-30; it reads MKRKVKKMAAMATSIIMAIMIILHSIPVLA. A GH11 domain is found at 33-227; sequence IIYDNETGTH…SSGYANVYKN (195 aa). Glu124 (nucleophile) is an active-site residue. Glu214 acts as the Proton donor in catalysis. 3 consecutive CBM6 domains span residues 250 to 370, 387 to 507, and 527 to 647; these read SIIE…FIFS, SIIQ…FVFT, and SNIQ…FVFS. Glu253 and Glu255 together coordinate Ca(2+). Position 270 (Thr270) interacts with D-xylotriose. Residue Arg275 coordinates Ca(2+). The stretch at 278–339 is repeat 1; sequence GYIENGNTVT…SSTGSWNTYQ (62 aa). The segment at 278–616 is 3 X 61 AA approximate repeats; the sequence is GYIENGNTVT…GSTGSFDTYR (339 aa). D-xylotriose is bound by residues Tyr279, Asn336, and Asn363. Positions 279, 336, and 363 each coordinate D-xylobiose. Position 365 (Asp365) interacts with Ca(2+). Repeat 2 spans residues 415–476; the sequence is GYIENGYSTT…PSTNSWDSYQ (62 aa). Ca(2+) is bound by residues Gln530, Glu532, and Ser552. Repeat unit 3 spans residues 555–616; it reads GYIENGYSTT…GSTGSFDTYR (62 aa). Residues Tyr556, Asp613, and Asn640 each coordinate D-xylotriose. A Ca(2+)-binding site is contributed by Asp642.

This sequence belongs to the glycosyl hydrolase 11 (cellulase G) family.

The protein resides in the secreted. It catalyses the reaction Endohydrolysis of (1-&gt;4)-beta-D-xylosidic linkages in xylans.. It functions in the pathway glycan degradation; xylan degradation. Endoxylanase that degrades arabinoxylan and glucuronoxylan to xylobiose and xylotriose (in vitro). This Thermoclostridium stercorarium (Clostridium stercorarium) protein is Endo-1,4-beta-xylanase A (xynA).